The following is a 468-amino-acid chain: 6-phosphogluconate dehydrogenase, decarboxylating (468 aa).

Residues Gly-10–Gly-15, Asn-33–Ser-35, Val-74–Ala-76, and Asn-102 each bind NADP(+). Residues Asn-102 and Ser-128–Gly-130 contribute to the substrate site. Lys-183 acts as the Proton acceptor in catalysis. His-186–Asn-187 lines the substrate pocket. The active-site Proton donor is Glu-190. Positions 191, 260, 287, 445, and 451 each coordinate substrate.

It belongs to the 6-phosphogluconate dehydrogenase family. Homodimer.

The catalysed reaction is 6-phospho-D-gluconate + NADP(+) = D-ribulose 5-phosphate + CO2 + NADPH. Its pathway is carbohydrate degradation; pentose phosphate pathway; D-ribulose 5-phosphate from D-glucose 6-phosphate (oxidative stage): step 3/3. In terms of biological role, catalyzes the oxidative decarboxylation of 6-phosphogluconate to ribulose 5-phosphate and CO(2), with concomitant reduction of NADP to NADPH. In Klebsiella pneumoniae, this protein is 6-phosphogluconate dehydrogenase, decarboxylating (gnd).